We begin with the raw amino-acid sequence, 269 residues long: Shikimate dehydrogenase (NADP(+)) (269 aa).

Shikimate contacts are provided by residues serine 17–serine 19 and threonine 64. Residue lysine 68 is the Proton acceptor of the active site. Glutamate 80 serves as a coordination point for NADP(+). 2 residues coordinate shikimate: asparagine 89 and aspartate 105. Residues glycine 130–alanine 134, asparagine 154–lysine 159, and methionine 213 contribute to the NADP(+) site. Tyrosine 215 contributes to the shikimate binding site. Glycine 237 is a binding site for NADP(+).

Belongs to the shikimate dehydrogenase family. Homodimer.

It catalyses the reaction shikimate + NADP(+) = 3-dehydroshikimate + NADPH + H(+). The protein operates within metabolic intermediate biosynthesis; chorismate biosynthesis; chorismate from D-erythrose 4-phosphate and phosphoenolpyruvate: step 4/7. Involved in the biosynthesis of the chorismate, which leads to the biosynthesis of aromatic amino acids. Catalyzes the reversible NADPH linked reduction of 3-dehydroshikimate (DHSA) to yield shikimate (SA). In Neisseria lactamica, this protein is Shikimate dehydrogenase (NADP(+)).